The sequence spans 148 residues: Small ribosomal subunit protein uS9 (148 aa).

This sequence belongs to the universal ribosomal protein uS9 family.

In Drosophila melanogaster (Fruit fly), this protein is Small ribosomal subunit protein uS9 (RpS16).